Consider the following 679-residue polypeptide: DNA ligase (679 aa).

NAD(+) is bound by residues 36 to 40 (DEYYD) and 94 to 95 (SL). The active-site N6-AMP-lysine intermediate is the Lys-126. NAD(+) is bound by residues Arg-147, Glu-181, Lys-299, and Lys-323. Positions 415, 418, 433, and 438 each coordinate Zn(2+). The 77-residue stretch at 603–679 (IQSTKLENKT…DEEFLKKMLE (77 aa)) folds into the BRCT domain.

Belongs to the NAD-dependent DNA ligase family. LigA subfamily. The cofactor is Mg(2+). Mn(2+) serves as cofactor.

The enzyme catalyses NAD(+) + (deoxyribonucleotide)n-3'-hydroxyl + 5'-phospho-(deoxyribonucleotide)m = (deoxyribonucleotide)n+m + AMP + beta-nicotinamide D-nucleotide.. Its function is as follows. DNA ligase that catalyzes the formation of phosphodiester linkages between 5'-phosphoryl and 3'-hydroxyl groups in double-stranded DNA using NAD as a coenzyme and as the energy source for the reaction. It is essential for DNA replication and repair of damaged DNA. The sequence is that of DNA ligase from Mycoplasmopsis pulmonis (strain UAB CTIP) (Mycoplasma pulmonis).